Here is a 216-residue protein sequence, read N- to C-terminus: Glycerol-3-phosphate acyltransferase 3 (216 aa).

5 consecutive transmembrane segments (helical) span residues 6-26 (LLLVVIVSYLLGSIPFGYLVS), 58-78 (LVAALDVVKGVSAVAFAGLVI), 92-112 (ILFAQVLAGLAAVAGHIWPVF), 125-145 (FGGMIALCPVAAIFGGEVLII), and 158-178 (ITGVVGAYALLIPLTFISGFP).

This sequence belongs to the PlsY family. In terms of assembly, probably interacts with PlsX.

Its subcellular location is the cell membrane. The catalysed reaction is an acyl phosphate + sn-glycerol 3-phosphate = a 1-acyl-sn-glycero-3-phosphate + phosphate. The protein operates within lipid metabolism; phospholipid metabolism. Functionally, catalyzes the transfer of an acyl group from acyl-phosphate (acyl-PO(4)) to glycerol-3-phosphate (G3P) to form lysophosphatidic acid (LPA). This enzyme utilizes acyl-phosphate as fatty acyl donor, but not acyl-CoA or acyl-ACP. In Dehalococcoides mccartyi (strain ATCC BAA-2266 / KCTC 15142 / 195) (Dehalococcoides ethenogenes (strain 195)), this protein is Glycerol-3-phosphate acyltransferase 3.